The following is a 271-amino-acid chain: tRNA (guanine-N(1)-)-methyltransferase (271 aa).

S-adenosyl-L-methionine contacts are provided by residues Gly-120 and 145 to 150 (IGDYVL).

Belongs to the RNA methyltransferase TrmD family. As to quaternary structure, homodimer.

It localises to the cytoplasm. The enzyme catalyses guanosine(37) in tRNA + S-adenosyl-L-methionine = N(1)-methylguanosine(37) in tRNA + S-adenosyl-L-homocysteine + H(+). Functionally, specifically methylates guanosine-37 in various tRNAs. This chain is tRNA (guanine-N(1)-)-methyltransferase, found in Bifidobacterium longum subsp. infantis (strain ATCC 15697 / DSM 20088 / JCM 1222 / NCTC 11817 / S12).